Here is a 712-residue protein sequence, read N- to C-terminus: Polyribonucleotide nucleotidyltransferase (712 aa).

2 residues coordinate Mg(2+): Asp-487 and Asp-493. In terms of domain architecture, KH spans 554–613; sequence PKIITMTINPDKIRDVIGPSGKQINKIIEETGVKIDIEQDGTVFISSINQEMNDKAKKII. Residues 623–691 enclose the S1 motif domain; that stretch reads GEIYEGKVKR…KQGRVNLSRK (69 aa).

This sequence belongs to the polyribonucleotide nucleotidyltransferase family. Requires Mg(2+) as cofactor.

It is found in the cytoplasm. It carries out the reaction RNA(n+1) + phosphate = RNA(n) + a ribonucleoside 5'-diphosphate. Involved in mRNA degradation. Catalyzes the phosphorolysis of single-stranded polyribonucleotides processively in the 3'- to 5'-direction. This Bacillus anthracis (strain CDC 684 / NRRL 3495) protein is Polyribonucleotide nucleotidyltransferase.